The following is a 214-amino-acid chain: Triosephosphate isomerase (214 aa).

Position 6–8 (Asn6–Lys8) interacts with substrate. His85 acts as the Electrophile in catalysis. The active-site Proton acceptor is Glu133. Residues Ile138, Gly173, and Ala194–Ser195 contribute to the substrate site.

This sequence belongs to the triosephosphate isomerase family. Homotetramer; dimer of dimers.

The protein resides in the cytoplasm. It catalyses the reaction D-glyceraldehyde 3-phosphate = dihydroxyacetone phosphate. The protein operates within carbohydrate biosynthesis; gluconeogenesis. It participates in carbohydrate degradation; glycolysis; D-glyceraldehyde 3-phosphate from glycerone phosphate: step 1/1. Functionally, involved in the gluconeogenesis. Catalyzes stereospecifically the conversion of dihydroxyacetone phosphate (DHAP) to D-glyceraldehyde-3-phosphate (G3P). The chain is Triosephosphate isomerase from Halobacterium salinarum (strain ATCC 700922 / JCM 11081 / NRC-1) (Halobacterium halobium).